The primary structure comprises 141 residues: Hemoglobin subunit alpha (141 aa).

Residues 1 to 141 enclose the Globin domain; it reads VLSPADKTNI…VSTVLVSKYR (141 aa). Ser-3 bears the Phosphoserine mark. The residue at position 7 (Lys-7) is an N6-succinyllysine. Thr-8 is modified (phosphothreonine). Lys-11 is modified (N6-succinyllysine). An N6-acetyllysine; alternate modification is found at Lys-16. Lys-16 carries the post-translational modification N6-succinyllysine; alternate. Tyr-24 is subject to Phosphotyrosine. Phosphoserine is present on Ser-35. Lys-40 carries the N6-succinyllysine modification. The residue at position 49 (Ser-49) is a Phosphoserine. Residue His-58 participates in O2 binding. His-87 lines the heme b pocket. Ser-102 is subject to Phosphoserine. Thr-108 carries the phosphothreonine modification. Phosphoserine occurs at positions 124 and 131. Position 134 is a phosphothreonine (Thr-134). Ser-138 carries the phosphoserine modification.

Belongs to the globin family. Heterotetramer of two alpha chains and two beta chains. In terms of tissue distribution, red blood cells.

Involved in oxygen transport from the lung to the various peripheral tissues. Its function is as follows. Hemopressin acts as an antagonist peptide of the cannabinoid receptor CNR1. Hemopressin-binding efficiently blocks cannabinoid receptor CNR1 and subsequent signaling. This Myotis velifer (Mouse-eared bat) protein is Hemoglobin subunit alpha (HBA).